A 511-amino-acid polypeptide reads, in one-letter code: 2-isopropylmalate synthase (511 aa).

Residues 4-266 enclose the Pyruvate carboxyltransferase domain; the sequence is IRIFDTTLRD…ETGIDLSQLY (263 aa). Residues Asp-13, His-201, His-203, and Asn-237 each contribute to the Mn(2+) site. Residues 391-511 are regulatory domain; it reads VLEKIRVVSG…IAANARAQKN (121 aa).

Belongs to the alpha-IPM synthase/homocitrate synthase family. LeuA type 1 subfamily. In terms of assembly, homodimer. Mn(2+) serves as cofactor.

Its subcellular location is the cytoplasm. The enzyme catalyses 3-methyl-2-oxobutanoate + acetyl-CoA + H2O = (2S)-2-isopropylmalate + CoA + H(+). It participates in amino-acid biosynthesis; L-leucine biosynthesis; L-leucine from 3-methyl-2-oxobutanoate: step 1/4. In terms of biological role, catalyzes the condensation of the acetyl group of acetyl-CoA with 3-methyl-2-oxobutanoate (2-ketoisovalerate) to form 3-carboxy-3-hydroxy-4-methylpentanoate (2-isopropylmalate). The protein is 2-isopropylmalate synthase of Acetivibrio thermocellus (strain ATCC 27405 / DSM 1237 / JCM 9322 / NBRC 103400 / NCIMB 10682 / NRRL B-4536 / VPI 7372) (Clostridium thermocellum).